The following is a 189-amino-acid chain: High affinity copper uptake protein 1 (189 aa).

Topologically, residues 1 to 67 (MDHSAHMGMS…AGLVINTAGE (67 aa)) are extracellular. The Methionine segments (Mets) motif motif lies at 13 to 18 (MGMSDM). The disordered stretch occupies residues 15–36 (MSDMNHSTTMPPSHHHPTSSGS). A compositionally biased stretch (low complexity) spans 20 to 36 (HSTTMPPSHHHPTSSGS). The chain crosses the membrane as a helical span at residues 68 to 88 (MAGAFVAVFLLAMFYEGLKIA). Residues 89 to 131 (REGLLRKSQVSIRYNSMPVPGPNGTILMETHKTVGQQMLSFPH) are Cytoplasmic-facing. The residue at position 113 (Thr113) is a Phosphothreonine. A helical membrane pass occupies residues 132–152 (LLQTVLHIIQVVISYFLMLIF). Over 153-155 (MTY) the chain is Extracellular. A helical membrane pass occupies residues 156 to 176 (NGYLCIAVAAGAGTGYFLFSW). The Cytoplasmic portion of the chain corresponds to 177 to 189 (KKAVVVDITEHCH). Cys188 is modified (cysteine sulfenic acid (-SOH)).

It belongs to the copper transporter (Ctr) (TC 1.A.56) family. SLC31A subfamily. In terms of assembly, homotrimer; is stabilized by cisplatin via interactions between cisplatin and the methionine-rich clusters, and could be crucial for the copper(2+) reduction process and copper(1+) stabilization. Heterotrimer between SLC31A1, CCS and SOD1; this heterotrimer is copper(1+)-mediated and its maintenance is regulated through SOD1 activation. Interacts with KDR; this interaction is induced upon VEGFA stimulation leading to SLC31A1 and KDR subsequent co-internalization to early endosomes, thereby activating KDR downstream signaling in endothelial cells. Interacts (via C-terminal domain) with ATOX1 (via dimer form); this interaction improves ATOX1 stability and controls intracellular copper(1+) levels. Interacts with SLC31A2; this interaction stabilizes SLC31A2 and protects its from ubiquitination and degradation. Interacts (via C-terminal domain) with CCS; this interaction is copper(1+)-mediated. Proteolytic cleavage, leading to a truncated form, is facilitated by SLC31A2 and initiated preferentially by CTSL and to a minor extend by CTSB in endolysosomal compartments. A post-CTSL/cathepsin L processing occurs to yield to the fully truncated form. In terms of processing, sulfenylated at Cys-188 after stimulation with VEGFA, which induces SLC31A1-KDR disulfide bond formation and their co-internalization to early endosomes, driving to a sustained VEGFR2 signaling.

The protein localises to the cell membrane. The protein resides in the early endosome membrane. It is found in the recycling endosome membrane. Its subcellular location is the apical cell membrane. It localises to the late endosome membrane. The protein localises to the basolateral cell membrane. It catalyses the reaction Ag(+)(out) = Ag(+)(in). It carries out the reaction Cu(+)(out) = Cu(+)(in). Its function is as follows. Uniporter that mediates the transport of copper(1+) from the extracellular space to the cytoplasm, across the plasma membrane and delivers directly copper(1+) to specific chaperone such as ATOX1, via a copper(1+)- mediated transient interaction between the C-terminal domain and a copper(1+) chaperone, thus controlling intracellular copper(1+) levels. May function in copper(1+) import from the apical membrane thus may drive intestinal copper absorption. The copper(1+) transport mechanism is sodium-independent, saturable and of high-affinity. Also mediates the uptake of silver(1+). May function in the influx of the platinum-containing chemotherapeutic agents. The platinum-containing chemotherapeutic agents uptake is saturable. In vitro, mediates the transport of cadmium(2+) into cells. Also participates in the first step of copper(2+) acquisition by cells through a direct transfer of copper(2+) from copper(2+) carriers in blood, such as ALB to the N-terminal domain of SLC31A1, leading to copper(2+) reduction and probably followed by copper(1+) stabilization. In addition, functions as a redox sensor to promote angiogenesis in endothelial cells, in a copper(1+) transport independent manner, by transmitting the VEGF-induced ROS signal through a sulfenylation at Cys-189 leadin g to a subsequent disulfide bond formation between SLC31A1 and KDR. The SLC31A1-KDR complex is then co-internalized to early endosomes, driving a sustained VEGFR2 signaling. Functionally, mobilizes copper(1+) out of the endosomal compartment, making copper(1+) available for export out of the cells. The polypeptide is High affinity copper uptake protein 1 (Sus scrofa (Pig)).